Here is a 487-residue protein sequence, read N- to C-terminus: N-succinylglutamate 5-semialdehyde dehydrogenase (487 aa).

221 to 226 is an NAD(+) binding site; sequence GSSDTG. Residues glutamate 244 and cysteine 278 contribute to the active site.

This sequence belongs to the aldehyde dehydrogenase family. AstD subfamily.

It carries out the reaction N-succinyl-L-glutamate 5-semialdehyde + NAD(+) + H2O = N-succinyl-L-glutamate + NADH + 2 H(+). It functions in the pathway amino-acid degradation; L-arginine degradation via AST pathway; L-glutamate and succinate from L-arginine: step 4/5. Its function is as follows. Catalyzes the NAD-dependent reduction of succinylglutamate semialdehyde into succinylglutamate. The sequence is that of N-succinylglutamate 5-semialdehyde dehydrogenase from Paraburkholderia xenovorans (strain LB400).